The chain runs to 315 residues: Ribosomal RNA small subunit methyltransferase H (315 aa).

Residues 35–37 (GGH), D55, F80, D102, and Q109 contribute to the S-adenosyl-L-methionine site.

It belongs to the methyltransferase superfamily. RsmH family.

It is found in the cytoplasm. The enzyme catalyses cytidine(1402) in 16S rRNA + S-adenosyl-L-methionine = N(4)-methylcytidine(1402) in 16S rRNA + S-adenosyl-L-homocysteine + H(+). Its function is as follows. Specifically methylates the N4 position of cytidine in position 1402 (C1402) of 16S rRNA. The polypeptide is Ribosomal RNA small subunit methyltransferase H (Shewanella pealeana (strain ATCC 700345 / ANG-SQ1)).